A 103-amino-acid chain; its full sequence is Large ribosomal subunit protein uL24 (103 aa).

This sequence belongs to the universal ribosomal protein uL24 family. In terms of assembly, part of the 50S ribosomal subunit.

In terms of biological role, one of two assembly initiator proteins, it binds directly to the 5'-end of the 23S rRNA, where it nucleates assembly of the 50S subunit. Functionally, one of the proteins that surrounds the polypeptide exit tunnel on the outside of the subunit. This chain is Large ribosomal subunit protein uL24, found in Actinobacillus succinogenes (strain ATCC 55618 / DSM 22257 / CCUG 43843 / 130Z).